Reading from the N-terminus, the 245-residue chain is 1-(5-phosphoribosyl)-5-[(5-phosphoribosylamino)methylideneamino] imidazole-4-carboxamide isomerase (245 aa).

D7 serves as the catalytic Proton acceptor. D129 functions as the Proton donor in the catalytic mechanism.

The protein belongs to the HisA/HisF family.

The protein localises to the cytoplasm. The enzyme catalyses 1-(5-phospho-beta-D-ribosyl)-5-[(5-phospho-beta-D-ribosylamino)methylideneamino]imidazole-4-carboxamide = 5-[(5-phospho-1-deoxy-D-ribulos-1-ylimino)methylamino]-1-(5-phospho-beta-D-ribosyl)imidazole-4-carboxamide. Its pathway is amino-acid biosynthesis; L-histidine biosynthesis; L-histidine from 5-phospho-alpha-D-ribose 1-diphosphate: step 4/9. The sequence is that of 1-(5-phosphoribosyl)-5-[(5-phosphoribosylamino)methylideneamino] imidazole-4-carboxamide isomerase from Salmonella agona (strain SL483).